Here is a 250-residue protein sequence, read N- to C-terminus: Prophage antitermination protein Q homolog QuuQ (250 aa).

This sequence belongs to the phage antitermination Q type 2 family.

Its function is as follows. Positively regulate expression of some phage genes. Bacterial host RNA polymerase modified by antitermination proteins transcribes through termination sites that otherwise prevent expression of the regulated genes. The sequence is that of Prophage antitermination protein Q homolog QuuQ (quuQ) from Escherichia coli (strain K12).